The sequence spans 182 residues: ATP-dependent protease subunit HslV (182 aa).

Residue Thr-10 is part of the active site. Residues Ala-164, Cys-167, and Thr-170 each coordinate Na(+).

This sequence belongs to the peptidase T1B family. HslV subfamily. As to quaternary structure, a double ring-shaped homohexamer of HslV is capped on each side by a ring-shaped HslU homohexamer. The assembly of the HslU/HslV complex is dependent on binding of ATP.

The protein resides in the cytoplasm. The enzyme catalyses ATP-dependent cleavage of peptide bonds with broad specificity.. With respect to regulation, allosterically activated by HslU binding. Protease subunit of a proteasome-like degradation complex believed to be a general protein degrading machinery. The chain is ATP-dependent protease subunit HslV from Chelativorans sp. (strain BNC1).